An 82-amino-acid chain; its full sequence is Envelope small membrane protein (82 aa).

Topologically, residues 1 to 19 are virion surface; sequence MTFPRALTVIDDNGMVISI. Residues 20–40 traverse the membrane as a helical segment; it reads IFWLLLIIILILFSIALLNII. Topologically, residues 41-82 are intravirion; that stretch reads KLCMVCCNLGRTVVVIPVRHAYDAYKNFMRINAYNHNEALLV.

Belongs to the alphacoronaviruses E protein family. Homopentamer. Interacts with membrane protein M in the budding compartment of the host cell, which is located between endoplasmic reticulum and the Golgi complex. Interacts with Nucleoprotein.

The protein resides in the host Golgi apparatus membrane. In terms of biological role, plays a central role in virus morphogenesis and assembly. Acts as a viroporin and self-assembles in host membranes forming pentameric protein-lipid pores that allow ion transport. Also plays a role in the induction of apoptosis. The protein is Envelope small membrane protein of Canine coronavirus (strain BGF10) (CCoV).